The primary structure comprises 20 residues: QNCCNGGCSSKWCKGHARCC.

Residue Gln1 is modified to Pyrrolidone carboxylic acid. Intrachain disulfides connect Cys3/Cys13, Cys4/Cys19, and Cys8/Cys20. Cys20 bears the Cysteine amide mark.

Expressed by the venom duct.

It localises to the secreted. Mu-conotoxins block voltage-gated sodium channels (VGSC). Potently displaces (125)I-TIIIA from native rat brain Nav1.2/SCN2A (IC(50) is 5 nM) and muscle Nav1.4/SCN4A (IC(50) is 3 nM) VGSCs. Potently and irreversibly inhibits current through Xenopus oocyte-expressed Nav1.2/SCN2A and Nav1.4/SCN4A. This chain is Mu-conotoxin SIIIB, found in Conus striatus (Striated cone).